A 358-amino-acid chain; its full sequence is Gentisate 1,2-dioxygenase (358 aa).

Positions 239 to 358 (QTLRQRAEND…AFNFYAEAEP (120 aa)) constitute a Cupin type-1 domain.

This sequence belongs to the gentisate 1,2-dioxygenase family. In terms of assembly, homotetramer.

The enzyme catalyses 2,5-dihydroxybenzoate + O2 = 3-maleylpyruvate + H(+). The protein operates within aromatic compound metabolism; naphthalene degradation. Its activity is regulated as follows. Inhibited by 2,2'-dipyridyl. Functionally, catalyzes the oxygen-dependent ring fission of gentisate between the carboxyl and proximal hydroxyl groups at positions 1 and 2 of the aromatic ring to form maleylpyruvate. No activity with cathechol and protecatechuate as substrates. Part of a 3-hydroxybenzoic acid-degradation pathway. This chain is Gentisate 1,2-dioxygenase (gdoA), found in Haloferax sp.